A 41-amino-acid polypeptide reads, in one-letter code: GILDTIKSIASKVWNSKTVQDLKRKGINWVANKLGVSPQAA.

It belongs to the non-disulfide-bridged peptide (NDBP) superfamily. Long chain multifunctional peptide (group 2) family. In terms of tissue distribution, expressed by the venom gland.

It localises to the secreted. In terms of biological role, antimicrobial activity against S.typhimurium, K.pneumoniae, E.cloacae, P.aeruginosa, E.coli and S.marcescens. Also shows hemolytic activity when tested in human erythrocytes. The polypeptide is Hadrurin (Hoffmannihadrurus aztecus (Mexican scorpion)).